A 736-amino-acid polypeptide reads, in one-letter code: Polyribonucleotide nucleotidyltransferase (736 aa).

Asp506 and Asp512 together coordinate Mg(2+). The KH domain occupies 573–632 (PRLTTIQVPVDAIGLIIGKGGETIRSITEETGAEINIEDDGTVTIACSSVEGTHAALATI). Residues 642-717 (GTIYLGKVRD…GKTRFALSMR (76 aa)) form the S1 motif domain.

It belongs to the polyribonucleotide nucleotidyltransferase family. Requires Mg(2+) as cofactor.

It is found in the cytoplasm. It catalyses the reaction RNA(n+1) + phosphate = RNA(n) + a ribonucleoside 5'-diphosphate. Functionally, involved in mRNA degradation. Catalyzes the phosphorolysis of single-stranded polyribonucleotides processively in the 3'- to 5'-direction. This chain is Polyribonucleotide nucleotidyltransferase, found in Chlorobium limicola (strain DSM 245 / NBRC 103803 / 6330).